We begin with the raw amino-acid sequence, 427 residues long: Transcription termination factor Rho (427 aa).

The Rho RNA-BD domain maps to Tyr55–Pro130. Residues Gly173 to Gly178, Lys185 to Thr190, and Arg216 each bind ATP.

The protein belongs to the Rho family. In terms of assembly, homohexamer. The homohexamer assembles into an open ring structure.

Its function is as follows. Facilitates transcription termination by a mechanism that involves Rho binding to the nascent RNA, activation of Rho's RNA-dependent ATPase activity, and release of the mRNA from the DNA template. This chain is Transcription termination factor Rho, found in Thermotoga maritima (strain ATCC 43589 / DSM 3109 / JCM 10099 / NBRC 100826 / MSB8).